Consider the following 464-residue polypeptide: NADH-quinone oxidoreductase subunit N 2 (464 aa).

The next 14 membrane-spanning stretches (helical) occupy residues 12–32, 33–53, 62–82, 93–113, 117–137, 152–172, 189–209, 227–247, 254–274, 282–304, 310–330, 351–371, 400–420, and 434–454; these read VGII…LIGF, LGFL…LAGY, INAF…FVIF, TFVE…IMVS, LAVI…SVGM, LVLG…YIGA, FALA…AAPF, FIST…ASYI, FSYI…LVAY, MLAY…YNPL, IFYV…LSIL, PFLA…PPFA, IIAA…EPAT, and IGIS…NILF.

It belongs to the complex I subunit 2 family. NDH-1 is composed of 14 different subunits. Subunits NuoA, H, J, K, L, M, N constitute the membrane sector of the complex.

It localises to the cell inner membrane. It catalyses the reaction a quinone + NADH + 5 H(+)(in) = a quinol + NAD(+) + 4 H(+)(out). NDH-1 shuttles electrons from NADH, via FMN and iron-sulfur (Fe-S) centers, to quinones in the respiratory chain. The immediate electron acceptor for the enzyme in this species is believed to be ubiquinone. Couples the redox reaction to proton translocation (for every two electrons transferred, four hydrogen ions are translocated across the cytoplasmic membrane), and thus conserves the redox energy in a proton gradient. This is NADH-quinone oxidoreductase subunit N 2 from Hydrogenobaculum sp. (strain Y04AAS1).